The following is a 181-amino-acid chain: Putative manganese efflux pump MntP (181 aa).

The next 5 membrane-spanning stretches (helical) occupy residues 35-55 (IIFG…GSIA), 59-79 (VADW…LLMI), 102-122 (AATG…LAFI), 126-146 (ILIT…LGVM), and 161-181 (ILGG…HLTM).

This sequence belongs to the MntP (TC 9.B.29) family.

It is found in the cell inner membrane. In terms of biological role, probably functions as a manganese efflux pump. In Nitrosomonas eutropha (strain DSM 101675 / C91 / Nm57), this protein is Putative manganese efflux pump MntP.